A 1174-amino-acid chain; its full sequence is Pecanex-like protein 4 (1174 aa).

14 helical membrane passes run 40-60 (IYVN…TGTL), 72-92 (AAAL…LISV), 140-160 (TVFH…YLLP), 173-193 (TAVL…SLIV), 217-237 (LYIF…NIPA), 244-264 (ILHI…LPPP), 284-304 (SMST…AAVV), 307-327 (FIPS…LLSL), 366-386 (FLFI…HHYV), 394-414 (SGAQ…VWIL), 451-471 (IGAV…VAFL), 543-563 (LIQF…LWTE), 580-600 (VFAP…SPLL), and 643-663 (LTAA…LPGS). The segment covering 785-797 (PSTQENKTENTGE) has biased composition (polar residues). Residues 785 to 875 (PSTQENKTEN…DDHSAGTGPK (91 aa)) are disordered. N-linked (GlcNAc...) asparagine glycosylation is present at Asn790. The span at 798 to 810 (ASPALPPAANSSP) shows a compositional bias: low complexity. Residues 835-846 (PAIKNRKEKLQS) are compositionally biased toward basic and acidic residues. N-linked (GlcNAc...) asparagine glycosylation is found at Asn1122 and Asn1149.

The protein belongs to the pecanex family.

The protein resides in the membrane. This is Pecanex-like protein 4 from Mus musculus (Mouse).